We begin with the raw amino-acid sequence, 342 residues long: Outer membrane porin C (342 aa).

It belongs to the Gram-negative porin family. As to quaternary structure, homotrimer.

It localises to the cell outer membrane. Forms pores that allow passive diffusion of small molecules across the outer membrane. In R.aquatilis OmpC is involved in the adhesion to wheat roots. In Rahnella aquatilis, this protein is Outer membrane porin C (ompC).